The primary structure comprises 155 residues: NSKKVVIAAVNGFALGGCELAMACDIRIASAKAKFGQPEVTLGITPGYGGTQRLTRLVGMAKAKELIFTGQVIKADEAEKIGLVNRVVEPDILIEEVEKLAKIIAKNAQLAVRYSKEAIQLGAQTDINTGIDIESNLFGLCFSTKDQKEGIVSFR.

It belongs to the enoyl-CoA hydratase/isomerase family.

It carries out the reaction a short-chain (3S)-3-hydroxyacyl-CoA = a short-chain (2E)-enoyl-CoA + H2O. Its pathway is lipid metabolism; butanoate metabolism. This is Short-chain-enoyl-CoA hydratase (crt) from Clostridioides difficile (Peptoclostridium difficile).